A 422-amino-acid polypeptide reads, in one-letter code: UPF0229 protein Spro_2732 (422 aa).

Residues 77-90 show a composition bias toward basic and acidic residues; sequence PGNDHFVQNDRVER. Residues 77–109 are disordered; the sequence is PGNDHFVQNDRVERPQGGGGGGSGQGNASQDGE. Gly residues predominate over residues 92 to 101; it reads QGGGGGGSGQ.

It belongs to the UPF0229 family.

The polypeptide is UPF0229 protein Spro_2732 (Serratia proteamaculans (strain 568)).